The sequence spans 202 residues: ATP-dependent Clp protease proteolytic subunit (202 aa).

Ser-98 acts as the Nucleophile in catalysis. Residue His-123 is part of the active site.

The protein belongs to the peptidase S14 family. In terms of assembly, fourteen ClpP subunits assemble into 2 heptameric rings which stack back to back to give a disk-like structure with a central cavity, resembling the structure of eukaryotic proteasomes.

It is found in the cytoplasm. The catalysed reaction is Hydrolysis of proteins to small peptides in the presence of ATP and magnesium. alpha-casein is the usual test substrate. In the absence of ATP, only oligopeptides shorter than five residues are hydrolyzed (such as succinyl-Leu-Tyr-|-NHMec, and Leu-Tyr-Leu-|-Tyr-Trp, in which cleavage of the -Tyr-|-Leu- and -Tyr-|-Trp bonds also occurs).. Its function is as follows. Cleaves peptides in various proteins in a process that requires ATP hydrolysis. Has a chymotrypsin-like activity. Plays a major role in the degradation of misfolded proteins. This is ATP-dependent Clp protease proteolytic subunit from Solidesulfovibrio magneticus (strain ATCC 700980 / DSM 13731 / RS-1) (Desulfovibrio magneticus).